The sequence spans 93 residues: Pyrimidine/purine nucleoside phosphorylase (93 aa).

Belongs to the nucleoside phosphorylase PpnP family.

The enzyme catalyses a purine D-ribonucleoside + phosphate = a purine nucleobase + alpha-D-ribose 1-phosphate. The catalysed reaction is adenosine + phosphate = alpha-D-ribose 1-phosphate + adenine. It carries out the reaction cytidine + phosphate = cytosine + alpha-D-ribose 1-phosphate. It catalyses the reaction guanosine + phosphate = alpha-D-ribose 1-phosphate + guanine. The enzyme catalyses inosine + phosphate = alpha-D-ribose 1-phosphate + hypoxanthine. The catalysed reaction is thymidine + phosphate = 2-deoxy-alpha-D-ribose 1-phosphate + thymine. It carries out the reaction uridine + phosphate = alpha-D-ribose 1-phosphate + uracil. It catalyses the reaction xanthosine + phosphate = alpha-D-ribose 1-phosphate + xanthine. In terms of biological role, catalyzes the phosphorolysis of diverse nucleosides, yielding D-ribose 1-phosphate and the respective free bases. Can use uridine, adenosine, guanosine, cytidine, thymidine, inosine and xanthosine as substrates. Also catalyzes the reverse reactions. The chain is Pyrimidine/purine nucleoside phosphorylase from Pseudomonas syringae pv. tomato (strain ATCC BAA-871 / DC3000).